The chain runs to 402 residues: LIM homeobox transcription factor 1-beta (402 aa).

LIM zinc-binding domains lie at 56–106 (CEGC…CKQD) and 115–168 (CSGC…CKGD). Disordered stretches follow at residues 176–229 (LSSV…LTTQ) and 326–346 (PYGS…PGDH). The segment at residues 219-278 (PKRPRTILTTQQRRAFKASFEVSSKPCRKVRETLAAETGLSVRVVQVWFQNQRAKMKKLA) is a DNA-binding region (homeobox). Residues 326–338 (PYGSSDPFQQGLT) show a composition bias toward polar residues.

As to quaternary structure, interacts with DHX9. Expressed in most tissues. Highest levels in testis, thyroid, duodenum, skeletal muscle, and pancreatic islets.

It is found in the nucleus. Transcription factor involved in the regulation of podocyte-expressed genes. Essential for the specification of dorsal limb fate at both the zeugopodal and autopodal levels. The chain is LIM homeobox transcription factor 1-beta (LMX1B) from Homo sapiens (Human).